We begin with the raw amino-acid sequence, 1657 residues long: Androglobin (1657 aa).

Residues 1-11 (MASKQAKRKEV) are compositionally biased toward basic residues. Disordered regions lie at residues 1–40 (MASKQAKRKEVHRINSAHGSDKSKDLYHFGSNVPPGSFEQ) and 321–398 (TKEN…SSDV). Residues 70 to 402 (KDKTAKSPIF…RPSSDVQYSM (333 aa)) form the Calpain catalytic domain. A compositionally biased stretch (basic and acidic residues) spans 321 to 386 (TKENKDGKDG…DGEKEKEKFK (66 aa)). Residues 762–889 (HVCSMTTFVI…EDVSLAEWVD (128 aa)) enclose the Globin; C-terminal part domain. Residues Q791 and H823 each coordinate heme b. The region spanning 905 to 934 (EIAAAVKIQSMWKGCYVRLLMKARKPETKE) is the IQ domain. In terms of domain architecture, Globin; N-terminal part spans 935-967 (NVTVADTLQKIWAVLEMNLEQYALSLLRLMFKS). Disordered regions lie at residues 1184 to 1226 (SKQV…TDTG), 1288 to 1356 (KHEE…QEDP), 1422 to 1459 (TTDTTTSAPSPETLSVSQSQTKSSEEGELDTGKYADIK), and 1638 to 1657 (IEKKSPASDSQKKKKVGKKK). Basic and acidic residues predominate over residues 1321–1336 (EKSAEKEKLAKEKQAP). 2 stretches are compositionally biased toward polar residues: residues 1341–1351 (QQVQMPTAVHS) and 1422–1443 (TTDTTTSAPSPETLSVSQSQTK). A coiled-coil region spans residues 1585 to 1640 (DEVLEMYGEMRDSVDEARQKILDIREVYRNKLLEAERLRMEALAAQEAAVKIEIEK).

The protein in the central section; belongs to the globin family. This sequence in the N-terminal section; belongs to the peptidase C2 family. In terms of assembly, interacts with septin SEPT10; contributes to in vitro proteolytic cleavage of SEPT10 in a calmodulin-dependent manner. Interacts with CFAP69. Interacts with SPEF2. May interact with calmodulin. As to expression, strongly expressed in testis and lung. Weakly expressed in heart, brain, spleen, kidney and tongue.

It localises to the cell projection. The protein localises to the cilium. Its subcellular location is the flagellum. Probable chimeric globin with a bis-histidyl six-coordinate heme-iron atom through which it could bind dioxygen, carbon monoxide and nitric oxide. Required for sperm flagellum formation and maturation of elongating spermatids, thus playing an essential role in male fertility. The protein is Androglobin of Mus musculus (Mouse).